The primary structure comprises 151 residues: Small ribosomal subunit protein bS6 (151 aa).

The segment at histidine 96–alanine 151 is disordered.

The protein belongs to the bacterial ribosomal protein bS6 family.

Its function is as follows. Binds together with bS18 to 16S ribosomal RNA. In Brucella anthropi (strain ATCC 49188 / DSM 6882 / CCUG 24695 / JCM 21032 / LMG 3331 / NBRC 15819 / NCTC 12168 / Alc 37) (Ochrobactrum anthropi), this protein is Small ribosomal subunit protein bS6.